A 700-amino-acid polypeptide reads, in one-letter code: Elongation factor G (700 aa).

The region spanning 8-290 (ERYRNIGISA…AVVEYLPSPV (283 aa)) is the tr-type G domain. GTP contacts are provided by residues 17–24 (AHIDAGKT), 88–92 (DTPGH), and 142–145 (NKMD).

The protein belongs to the TRAFAC class translation factor GTPase superfamily. Classic translation factor GTPase family. EF-G/EF-2 subfamily.

Its subcellular location is the cytoplasm. Its function is as follows. Catalyzes the GTP-dependent ribosomal translocation step during translation elongation. During this step, the ribosome changes from the pre-translocational (PRE) to the post-translocational (POST) state as the newly formed A-site-bound peptidyl-tRNA and P-site-bound deacylated tRNA move to the P and E sites, respectively. Catalyzes the coordinated movement of the two tRNA molecules, the mRNA and conformational changes in the ribosome. This is Elongation factor G from Mannheimia succiniciproducens (strain KCTC 0769BP / MBEL55E).